A 143-amino-acid chain; its full sequence is Large ribosomal subunit protein uL11 (143 aa).

Belongs to the universal ribosomal protein uL11 family. As to quaternary structure, part of the ribosomal stalk of the 50S ribosomal subunit. Interacts with L10 and the large rRNA to form the base of the stalk. L10 forms an elongated spine to which L12 dimers bind in a sequential fashion forming a multimeric L10(L12)X complex. One or more lysine residues are methylated.

Its function is as follows. Forms part of the ribosomal stalk which helps the ribosome interact with GTP-bound translation factors. This is Large ribosomal subunit protein uL11 from Alkalilimnicola ehrlichii (strain ATCC BAA-1101 / DSM 17681 / MLHE-1).